Here is a 503-residue protein sequence, read N- to C-terminus: D-alanine--D-alanyl carrier protein ligase (503 aa).

151–152 (TS) provides a ligand contact to ATP. Position 196 (Asp-196) interacts with D-alanine. 291 to 296 (NTYGPT) is a binding site for ATP. Val-300 lines the D-alanine pocket. The ATP site is built by Asp-382 and Lys-491. Lys-491 is a binding site for D-alanine.

This sequence belongs to the ATP-dependent AMP-binding enzyme family. DltA subfamily.

It localises to the cytoplasm. It catalyses the reaction holo-[D-alanyl-carrier protein] + D-alanine + ATP = D-alanyl-[D-alanyl-carrier protein] + AMP + diphosphate. It functions in the pathway cell wall biogenesis; lipoteichoic acid biosynthesis. Catalyzes the first step in the D-alanylation of lipoteichoic acid (LTA), the activation of D-alanine and its transfer onto the D-alanyl carrier protein (Dcp) DltC. In an ATP-dependent two-step reaction, forms a high energy D-alanyl-AMP intermediate, followed by transfer of the D-alanyl residue as a thiol ester to the phosphopantheinyl prosthetic group of the Dcp. D-alanylation of LTA plays an important role in modulating the properties of the cell wall in Gram-positive bacteria, influencing the net charge of the cell wall. This Bacillus velezensis (strain DSM 23117 / BGSC 10A6 / LMG 26770 / FZB42) (Bacillus amyloliquefaciens subsp. plantarum) protein is D-alanine--D-alanyl carrier protein ligase.